The primary structure comprises 346 residues: Nicotinate-nucleotide--dimethylbenzimidazole phosphoribosyltransferase (346 aa).

Glutamate 313 serves as the catalytic Proton acceptor.

The protein belongs to the CobT family.

It carries out the reaction 5,6-dimethylbenzimidazole + nicotinate beta-D-ribonucleotide = alpha-ribazole 5'-phosphate + nicotinate + H(+). It participates in nucleoside biosynthesis; alpha-ribazole biosynthesis; alpha-ribazole from 5,6-dimethylbenzimidazole: step 1/2. Catalyzes the synthesis of alpha-ribazole-5'-phosphate from nicotinate mononucleotide (NAMN) and 5,6-dimethylbenzimidazole (DMB). This is Nicotinate-nucleotide--dimethylbenzimidazole phosphoribosyltransferase from Parabacteroides distasonis (strain ATCC 8503 / DSM 20701 / CIP 104284 / JCM 5825 / NCTC 11152).